Consider the following 250-residue polypeptide: NADH-quinone oxidoreductase subunit C (250 aa).

The protein belongs to the complex I 30 kDa subunit family. In terms of assembly, NDH-1 is composed of 14 different subunits. Subunits NuoB, C, D, E, F, and G constitute the peripheral sector of the complex.

It localises to the cell inner membrane. The enzyme catalyses a quinone + NADH + 5 H(+)(in) = a quinol + NAD(+) + 4 H(+)(out). In terms of biological role, NDH-1 shuttles electrons from NADH, via FMN and iron-sulfur (Fe-S) centers, to quinones in the respiratory chain. The immediate electron acceptor for the enzyme in this species is believed to be ubiquinone. Couples the redox reaction to proton translocation (for every two electrons transferred, four hydrogen ions are translocated across the cytoplasmic membrane), and thus conserves the redox energy in a proton gradient. This chain is NADH-quinone oxidoreductase subunit C, found in Xanthomonas euvesicatoria pv. vesicatoria (strain 85-10) (Xanthomonas campestris pv. vesicatoria).